The primary structure comprises 914 residues: MGCSPSTLPPAPSAGQTGERGSLPLDASEKDESRLFCIKLRRSRLRRCSCGGVTLQPPSDGNGSTAGDNLCGQVLLNPLQTKSEADYEKLSTGKKDSIVTVAALGNFTHSVVRRATGSTGTSGTSSSGGNSRPGHRKSSLALALTPEDEPMDVYQRNLMDLKYPTVLPPNPPLKALLVFHKSDSICEAITAACQRHQLDVTLVKSKEEALDTLQKSYATAQCYHLIIIDARSSKNLDAEHIARTIRHTHGHHLTTIIAVCKKSFFEKDDVLIALLDAGVNRCVAETTNLAMCSVELKQILHSIIRPHNVMSTQQALYTALHRLKEVVLITDDLLRIQYANRATERLLNMRLDEIISKQLEDIFVSDLSTISEQCKNIKEFDGILTVRRKSQEGIPMHVRVVPVACIGSAPTHLIFNFDVPGGQMDFIATLPQPKEAPRGSLHSVRRCSFDVRSIASDGLRRTSLAKLTSLPLEAPITKIINLLSQVQENCSADEARLIDKVLEFLKREGLYSPQMKEIRTDDPIATDLIGALLTGPSVYSSRRSSNDSIIRTGSSTRTAAIVPAKMKSNPIIMELLDESLSWDFDIFKLEEITDYHPLLYLGMEMFRRFDVFATLNIDENVCKAWLAVIEAHYRKSNTYHNSTHAADVMQATGAFITQLTNKDMLVMDRMEEATALIAAAAHDVDHPGRSSAFLCNSNDALAVLYNDLTVLENHHAAITFKLTLGDDKINIFKNLDKETYKSARSTIIDMILATEMTRHFEHLAKFVSVFGGEEPRDHNPQTDEETSILMRRMLIKVADVSNPARPMQFCIEWARRIAEEYFMQTDEEKQRHLPIVMPMFDRATCSIPKSQIGFIEYIIQDMMHAWESFIDMPQLITYMQINYSQWKKYDEQGVNTLAEIMAKQPPVGKMANSK.

Disordered regions lie at residues 1-27 and 113-138; these read MGCS…PLDA and RRAT…HRKS. Residues 116–129 are compositionally biased toward low complexity; it reads TGSTGTSGTSSSGG. In terms of domain architecture, PAS spans 312-359; sequence TQQALYTALHRLKEVVLITDDLLRIQYANRATERLLNMRLDEIISKQL. A PDEase domain is found at 558 to 893; sequence TAAIVPAKMK…SQWKKYDEQG (336 aa). His-640 (proton donor) is an active-site residue. A divalent metal cation-binding residues include His-644, His-682, Asp-683, and Asp-799.

The protein belongs to the cyclic nucleotide phosphodiesterase family. PDE8 subfamily. It depends on a divalent metal cation as a cofactor. In terms of tissue distribution, expressed in Malpighian tubules and head.

The enzyme catalyses 3',5'-cyclic AMP + H2O = AMP + H(+). It functions in the pathway purine metabolism; 3',5'-cyclic AMP degradation; AMP from 3',5'-cyclic AMP: step 1/1. Hydrolyzes the second messenger cAMP, which is a key regulator of many important physiological processes. Involved in the positive regulation of MAP kinase signaling and in inhibiting oxidative stress-induced cell death. The chain is High affinity cAMP-specific and IBMX-insensitive 3',5'-cyclic phosphodiesterase 8 from Drosophila melanogaster (Fruit fly).